The sequence spans 595 residues: Flap endonuclease 1 (595 aa).

An N-domain region spans residues 1-106; it reads MGIKGLTKFI…SELEKRGEKR (106 aa). Aspartate 34 contributes to the Mg(2+) binding site. Positions 47 and 72 each coordinate DNA. Aspartate 88, glutamate 160, glutamate 162, aspartate 181, and aspartate 183 together coordinate Mg(2+). The tract at residues 124 to 267 is I-domain; sequence EIKKQSGRTV…KTAYNLIKEY (144 aa). Residue glutamate 160 coordinates DNA. DNA is bound by residues glycine 245 and aspartate 247. Aspartate 247 contributes to the Mg(2+) binding site. The interaction with PCNA stretch occupies residues 350-358; that stretch reads TQRRLDNFF. The segment at 370 to 493 is disordered; it reads NEESQIKKEV…TGDVYSFPNG (124 aa). A compositionally biased stretch (polar residues) spans 392 to 401; sequence NDSSTKLNSK. The segment covering 406-425 has biased composition (basic and acidic residues); that stretch reads PKGEKESKTEKDDGDTHNGN. Over residues 426 to 436 the composition is skewed to acidic residues; the sequence is DNEEEGGEGET. Positions 461-475 are enriched in basic and acidic residues; it reads HKSDSESGNVKKEST.

This sequence belongs to the XPG/RAD2 endonuclease family. FEN1 subfamily. Interacts with PCNA. Three molecules of FEN1 bind to one PCNA trimer with each molecule binding to one PCNA monomer. PCNA stimulates the nuclease activity without altering cleavage specificity. It depends on Mg(2+) as a cofactor. In terms of processing, phosphorylated. Phosphorylation upon DNA damage induces relocalization to the nuclear plasma.

Its subcellular location is the nucleus. The protein localises to the nucleolus. It is found in the nucleoplasm. The protein resides in the mitochondrion. Functionally, structure-specific nuclease with 5'-flap endonuclease and 5'-3' exonuclease activities involved in DNA replication and repair. During DNA replication, cleaves the 5'-overhanging flap structure that is generated by displacement synthesis when DNA polymerase encounters the 5'-end of a downstream Okazaki fragment. It enters the flap from the 5'-end and then tracks to cleave the flap base, leaving a nick for ligation. Also involved in the long patch base excision repair (LP-BER) pathway, by cleaving within the apurinic/apyrimidinic (AP) site-terminated flap. Acts as a genome stabilization factor that prevents flaps from equilibrating into structures that lead to duplications and deletions. Also possesses 5'-3' exonuclease activity on nicked or gapped double-stranded DNA, and exhibits RNase H activity. Also involved in replication and repair of rDNA and in repairing mitochondrial DNA. The sequence is that of Flap endonuclease 1 from Plasmodium knowlesi (strain H).